Consider the following 262-residue polypeptide: Ferric siderophore reductase (262 aa).

4 residues coordinate [2Fe-2S] cluster: Cys-244, Cys-245, Cys-256, and Cys-259.

As to quaternary structure, monomer. The cofactor is [2Fe-2S] cluster.

It is found in the cytoplasm. It localises to the cell inner membrane. Its activity is regulated as follows. Displays pH dependent redox properties. SufD is necessary for the stability of FhuF. Functionally, siderophore-iron reductase which is involved in iron removal from the hydroxamate-type siderophores coprogen, ferrichrome and ferrioxamine B after their transport into the cell. Binds both the iron-loaded and the apo forms of ferrichrome. This is Ferric siderophore reductase (fhuF) from Escherichia coli (strain K12).